A 186-amino-acid chain; its full sequence is Ribosome-recycling factor (186 aa).

This sequence belongs to the RRF family.

Its subcellular location is the cytoplasm. In terms of biological role, responsible for the release of ribosomes from messenger RNA at the termination of protein biosynthesis. May increase the efficiency of translation by recycling ribosomes from one round of translation to another. This is Ribosome-recycling factor from Burkholderia cenocepacia (strain HI2424).